A 259-amino-acid polypeptide reads, in one-letter code: Proteasome subunit alpha type-7 (259 aa).

This sequence belongs to the peptidase T1A family. As to quaternary structure, the 26S proteasome consists of a 20S proteasome core and two 19S regulatory subunits. The 20S proteasome core is composed of 28 subunits that are arranged in four stacked rings, resulting in a barrel-shaped structure. The two end rings are each formed by seven alpha subunits, and the two central rings are each formed by seven beta subunits. The catalytic chamber with the active sites is on the inside of the barrel.

It is found in the cytoplasm. It localises to the nucleus. The proteasome is a multicatalytic proteinase complex which is characterized by its ability to cleave peptides with Arg, Phe, Tyr, Leu, and Glu adjacent to the leaving group at neutral or slightly basic pH. The proteasome has an ATP-dependent proteolytic activity. In Solanum lycopersicum (Tomato), this protein is Proteasome subunit alpha type-7 (PAD1).